The sequence spans 129 residues: Small ribosomal subunit protein uS13 (129 aa).

A disordered region spans residues 96–129 (GLPVRGQRTSTNARTRKGPRKTVGVSKAAAAAKA).

It belongs to the universal ribosomal protein uS13 family. Part of the 30S ribosomal subunit. Forms a loose heterodimer with protein S19. Forms two bridges to the 50S subunit in the 70S ribosome.

Functionally, located at the top of the head of the 30S subunit, it contacts several helices of the 16S rRNA. In the 70S ribosome it contacts the 23S rRNA (bridge B1a) and protein L5 of the 50S subunit (bridge B1b), connecting the 2 subunits; these bridges are implicated in subunit movement. Contacts the tRNAs in the A and P-sites. This Opitutus terrae (strain DSM 11246 / JCM 15787 / PB90-1) protein is Small ribosomal subunit protein uS13.